The following is a 419-amino-acid chain: UDP-N-acetylglucosamine 1-carboxyvinyltransferase (419 aa).

22 to 23 (KN) lines the phosphoenolpyruvate pocket. A UDP-N-acetyl-alpha-D-glucosamine-binding site is contributed by R93. C117 acts as the Proton donor in catalysis. C117 is modified (2-(S-cysteinyl)pyruvic acid O-phosphothioketal). UDP-N-acetyl-alpha-D-glucosamine contacts are provided by D307 and I329.

It belongs to the EPSP synthase family. MurA subfamily.

The protein localises to the cytoplasm. The enzyme catalyses phosphoenolpyruvate + UDP-N-acetyl-alpha-D-glucosamine = UDP-N-acetyl-3-O-(1-carboxyvinyl)-alpha-D-glucosamine + phosphate. It participates in cell wall biogenesis; peptidoglycan biosynthesis. Its function is as follows. Cell wall formation. Adds enolpyruvyl to UDP-N-acetylglucosamine. The chain is UDP-N-acetylglucosamine 1-carboxyvinyltransferase from Shewanella frigidimarina (strain NCIMB 400).